The chain runs to 499 residues: Phenylalanine--tRNA ligase alpha subunit (499 aa).

L-phenylalanine contacts are provided by residues threonine 342, 381 to 383, and phenylalanine 422; that span reads QID. Residue glutamate 424 coordinates Mg(2+). Residue phenylalanine 447 participates in L-phenylalanine binding.

It belongs to the class-II aminoacyl-tRNA synthetase family. Phe-tRNA synthetase alpha subunit type 2 subfamily. As to quaternary structure, tetramer of two alpha and two beta subunits. Mg(2+) is required as a cofactor.

It localises to the cytoplasm. The enzyme catalyses tRNA(Phe) + L-phenylalanine + ATP = L-phenylalanyl-tRNA(Phe) + AMP + diphosphate + H(+). This is Phenylalanine--tRNA ligase alpha subunit from Pyrococcus furiosus (strain ATCC 43587 / DSM 3638 / JCM 8422 / Vc1).